The following is a 417-amino-acid chain: Gamma-glutamyl phosphate reductase (417 aa).

The protein belongs to the gamma-glutamyl phosphate reductase family.

It localises to the cytoplasm. The enzyme catalyses L-glutamate 5-semialdehyde + phosphate + NADP(+) = L-glutamyl 5-phosphate + NADPH + H(+). It participates in amino-acid biosynthesis; L-proline biosynthesis; L-glutamate 5-semialdehyde from L-glutamate: step 2/2. In terms of biological role, catalyzes the NADPH-dependent reduction of L-glutamate 5-phosphate into L-glutamate 5-semialdehyde and phosphate. The product spontaneously undergoes cyclization to form 1-pyrroline-5-carboxylate. The protein is Gamma-glutamyl phosphate reductase of Desulfitobacterium hafniense (strain Y51).